The sequence spans 261 residues: Cytochrome c oxidase subunit 3 (261 aa).

Topologically, residues 1 to 15 (MTHQTHAYHMVDPSP) are mitochondrial matrix. Residues 16–34 (WPLTGALSALLMTSGLTMW) form a helical membrane-spanning segment. At 35–40 (FHYHSV) the chain is on the mitochondrial intermembrane side. Residues 41–66 (VLLFLGLMTNTLTMFQWWRDVVREGT) traverse the membrane as a helical segment. At 67–72 (FQGHHT) the chain is on the mitochondrial matrix side. A helical membrane pass occupies residues 73–105 (PVVQEGLRYGMILFITSEVLFFTGFFWAFYHSS). The Mitochondrial intermembrane portion of the chain corresponds to 106-128 (LAPTPELGSYWPPVGVYPLNPLE). The helical transmembrane segment at 129–152 (VPLLNTSVLLASGVTITWAHHSLM) threads the bilayer. Residues 153–155 (EGN) are Mitochondrial matrix-facing. Residues 156-183 (RKNMLQALLITILLGVYFTLLQMFEYYE) traverse the membrane as a helical segment. Residues 184–190 (ASFTISD) lie on the Mitochondrial intermembrane side of the membrane. A helical transmembrane segment spans residues 191-223 (GIYGSTFFVTTGFHGLHVIIGSTFLLTCFIRQL). Residues 224–232 (KFHFTSNHH) lie on the Mitochondrial matrix side of the membrane. A helical membrane pass occupies residues 233 to 256 (FGFEAAAWYWHFVDVVWLFLYLSI). Residues 257 to 261 (YWWGS) lie on the Mitochondrial intermembrane side of the membrane.

This sequence belongs to the cytochrome c oxidase subunit 3 family. As to quaternary structure, component of the cytochrome c oxidase (complex IV, CIV), a multisubunit enzyme composed of 14 subunits. The complex is composed of a catalytic core of 3 subunits MT-CO1, MT-CO2 and MT-CO3, encoded in the mitochondrial DNA, and 11 supernumerary subunits COX4I, COX5A, COX5B, COX6A, COX6B, COX6C, COX7A, COX7B, COX7C, COX8 and NDUFA4, which are encoded in the nuclear genome. The complex exists as a monomer or a dimer and forms supercomplexes (SCs) in the inner mitochondrial membrane with NADH-ubiquinone oxidoreductase (complex I, CI) and ubiquinol-cytochrome c oxidoreductase (cytochrome b-c1 complex, complex III, CIII), resulting in different assemblies (supercomplex SCI(1)III(2)IV(1) and megacomplex MCI(2)III(2)IV(2)).

The protein resides in the mitochondrion inner membrane. It catalyses the reaction 4 Fe(II)-[cytochrome c] + O2 + 8 H(+)(in) = 4 Fe(III)-[cytochrome c] + 2 H2O + 4 H(+)(out). Its function is as follows. Component of the cytochrome c oxidase, the last enzyme in the mitochondrial electron transport chain which drives oxidative phosphorylation. The respiratory chain contains 3 multisubunit complexes succinate dehydrogenase (complex II, CII), ubiquinol-cytochrome c oxidoreductase (cytochrome b-c1 complex, complex III, CIII) and cytochrome c oxidase (complex IV, CIV), that cooperate to transfer electrons derived from NADH and succinate to molecular oxygen, creating an electrochemical gradient over the inner membrane that drives transmembrane transport and the ATP synthase. Cytochrome c oxidase is the component of the respiratory chain that catalyzes the reduction of oxygen to water. Electrons originating from reduced cytochrome c in the intermembrane space (IMS) are transferred via the dinuclear copper A center (CU(A)) of subunit 2 and heme A of subunit 1 to the active site in subunit 1, a binuclear center (BNC) formed by heme A3 and copper B (CU(B)). The BNC reduces molecular oxygen to 2 water molecules using 4 electrons from cytochrome c in the IMS and 4 protons from the mitochondrial matrix. The sequence is that of Cytochrome c oxidase subunit 3 (MT-CO3) from Mammuthus primigenius (Siberian woolly mammoth).